The following is a 643-amino-acid chain: Manganese lipoxygenase (643 aa).

The Lipoxygenase domain maps to 166–643 (WYTDEVFAQQ…PEQLANAIVI (478 aa)). Mn(2+) contacts are provided by His-325, His-330, His-510, Asn-514, and Ile-643.

This sequence belongs to the lipoxygenase family. It depends on Mn(2+) as a cofactor.

The enzyme catalyses (9Z,12Z)-octadecadienoate + O2 = (13S)-hydroperoxy-(9Z,11E)-octadecadienoate. Lipoxygenase that metabolizes linoleic and alpha-linolenic acids to 13S-hydroperoxy fatty acids. The polypeptide is Manganese lipoxygenase (Pleurotus sapidus (Oyster mushroom)).